Reading from the N-terminus, the 61-residue chain is MDTKLLDILACPITKGPLKLSADKTELISKGAGLAYPIRDGIPVMLESEARTLTDDERLDK.

This sequence belongs to the UPF0434 family.

This Pseudomonas putida (strain ATCC 700007 / DSM 6899 / JCM 31910 / BCRC 17059 / LMG 24140 / F1) protein is UPF0434 protein Pput_3813.